A 417-amino-acid polypeptide reads, in one-letter code: Tryptophan synthase beta chain (417 aa).

Lysine 111 carries the N6-(pyridoxal phosphate)lysine modification.

Belongs to the TrpB family. Tetramer of two alpha and two beta chains. Pyridoxal 5'-phosphate is required as a cofactor.

The catalysed reaction is (1S,2R)-1-C-(indol-3-yl)glycerol 3-phosphate + L-serine = D-glyceraldehyde 3-phosphate + L-tryptophan + H2O. Its pathway is amino-acid biosynthesis; L-tryptophan biosynthesis; L-tryptophan from chorismate: step 5/5. In terms of biological role, the beta subunit is responsible for the synthesis of L-tryptophan from indole and L-serine. The polypeptide is Tryptophan synthase beta chain (Fervidobacterium nodosum (strain ATCC 35602 / DSM 5306 / Rt17-B1)).